A 155-amino-acid chain; its full sequence is Ribonuclease H (155 aa).

Residues 9-150 form the RNase H type-1 domain; it reads DGQQVEMWTD…ADALANQGVE (142 aa). Residues Asp18, Glu56, Asp78, and Asp142 each coordinate Mg(2+).

It belongs to the RNase H family. As to quaternary structure, monomer. The cofactor is Mg(2+).

The protein resides in the cytoplasm. The catalysed reaction is Endonucleolytic cleavage to 5'-phosphomonoester.. Functionally, endonuclease that specifically degrades the RNA of RNA-DNA hybrids. The chain is Ribonuclease H from Bordetella bronchiseptica (strain ATCC BAA-588 / NCTC 13252 / RB50) (Alcaligenes bronchisepticus).